A 246-amino-acid polypeptide reads, in one-letter code: UPF0246 protein stu1967 (246 aa).

Belongs to the UPF0246 family.

The polypeptide is UPF0246 protein stu1967 (Streptococcus thermophilus (strain ATCC BAA-250 / LMG 18311)).